A 300-amino-acid chain; its full sequence is ClpXP adapter protein SpxH (300 aa).

This sequence belongs to the SpxH family. Interacts with Spx.

The protein resides in the cytoplasm. Adapter protein required for efficient degradation of Spx by ClpXP under non-stress conditions. Interaction with Spx stabilizes Spx and exposes the C-terminus of Spx for recognition and proteolysis by ClpXP. The polypeptide is ClpXP adapter protein SpxH (Shouchella clausii (strain KSM-K16) (Alkalihalobacillus clausii)).